Reading from the N-terminus, the 601-residue chain is Secretogranin-2 (601 aa).

The signal sequence occupies residues 1-30 (MSSQRNYCLAGCLSSCILVILMSFSDAASF). The segment at 89–109 (EQKDTQALSTDTAKSPTSDDE) is disordered. Residues 93–104 (TQALSTDTAKSP) show a composition bias toward polar residues. The residue at position 151 (Y151) is a Sulfotyrosine. A compositionally biased stretch (basic and acidic residues) spans 258 to 273 (VESQTQEELKESKEEV). The interval 258-307 (VESQTQEELKESKEEVEKTDDMEDEIKRSGLLGLQDEEPEKDTKEQESEN) is disordered.

The protein belongs to the chromogranin/secretogranin protein family.

Its subcellular location is the secreted. Its function is as follows. Neuroendocrine protein of the granin family that regulates the biogenesis of secretory granules. This Pelophylax ridibundus (Marsh frog) protein is Secretogranin-2.